The following is a 633-amino-acid chain: Cyclic GMP-AMP synthase-like receptor 1 (633 aa).

Disordered stretches follow at residues 23 to 80 (KVHG…HPHT), 107 to 214 (FKGP…TDPF), and 250 to 276 (REDD…RPSS). The span at 29 to 67 (KQHESAHPPRERHTERTATKRSDETKTASRPTASHEGKT) shows a compositional bias: basic and acidic residues. The segment covering 68–80 (HTTNPRGQVHPHT) has biased composition (polar residues). Basic and acidic residues-rich tracts occupy residues 125-143 (RKPE…DHRT), 176-194 (RKPD…DHRT), and 250-274 (REDD…DDRP). Glu353, Asp355, and Asp455 together coordinate Mg(2+).

Belongs to the mab-21 family. Mg(2+) is required as a cofactor. Mn(2+) serves as cofactor.

The catalysed reaction is UTP + ATP = 2',3'-cUAMP + 2 diphosphate. In terms of biological role, nucleotidyltransferase that catalyzes the formation of cyclic UMP-AMP (2',3'-cUAMP) from ATP and UTP and plays a key role in innate immunity. Acts as a key sensor of double-stranded DNA (dsDNA), the presence of dsDNA in the cytoplasm being a danger signal that triggers the immune responses. Directly binds dsDNA, activating the nucleotidyltransferase activity, leading to synthesis of 2',3'-cUAMP, a second messenger that binds to and activates Sting, thereby triggering the immune response via activation of the NF-kappa-B transcription factor. This is Cyclic GMP-AMP synthase-like receptor 1 from Crassostrea virginica (Eastern oyster).